Here is a 610-residue protein sequence, read N- to C-terminus: Zinc metalloproteinase-disintegrin-like BITM06A (610 aa).

The first 20 residues, 1-20, serve as a signal peptide directing secretion; the sequence is MIQVLLVTICLAAFPYQGSS. Residues 21 to 189 constitute a propeptide that is removed on maturation; sequence IILESGNVND…KKASQLVVTA (169 aa). The Peptidase M12B domain occupies 198–394; that stretch reads RYVELFIVVD…ENPQCILNEP (197 aa). Glu201 and Asp285 together coordinate Ca(2+). Intrachain disulfides connect Cys309–Cys389, Cys349–Cys373, and Cys351–Cys356. His334 contacts Zn(2+). Residue Glu335 is part of the active site. Residues His338 and His344 each coordinate Zn(2+). Asn372 carries N-linked (GlcNAc...) asparagine glycosylation. Positions 389, 392, 404, 407, 409, 411, 414, and 417 each coordinate Ca(2+). Residues 402-488 form the Disintegrin domain; it reads PPVCGNELLE…ECPADVFHKN (87 aa). Disulfide bonds link Cys405–Cys434, Cys416–Cys429, Cys418–Cys424, Cys428–Cys451, Cys442–Cys448, Cys447–Cys473, Cys460–Cys480, Cys467–Cys499, Cys492–Cys504, Cys511–Cys561, Cys526–Cys572, Cys539–Cys549, Cys556–Cys598, and Cys592–Cys603. The short motif at 466 to 468 is the D/ECD-tripeptide element; it reads ECD. 5 residues coordinate Ca(2+): Asp468, Pro469, Glu471, Asp483, and Val484.

The protein belongs to the venom metalloproteinase (M12B) family. P-III subfamily. P-IIIa sub-subfamily. As to quaternary structure, monomer. The cofactor is Zn(2+). In terms of tissue distribution, expressed by the venom gland.

The protein localises to the secreted. Functionally, snake venom metalloproteinase that impairs hemostasis in the envenomed animal. The protein is Zinc metalloproteinase-disintegrin-like BITM06A of Bothrops insularis (Golden lancehead).